The sequence spans 212 residues: Ropporin-1A (212 aa).

The 38-residue stretch at 12-49 folds into the RIIa domain; that stretch reads PELPKMLKEFAKAAIRVQPQDLIQWAADYFEALSRGET. Residue Ser56 is modified to Phosphoserine. The tract at residues 209–212 is interaction with RHPN1; sequence VQLE.

This sequence belongs to the ropporin family. In terms of assembly, homodimer. Interacts with AKAP3 and RHPN1. May interact with SPA17. Interacts with FSCB; the interaction increases upon spermatozoa capacitation conditions. Interacts with CFAP61. Sumoylated, sumoylation decreases upon spermatozoa capacitation conditions. In terms of tissue distribution, testis specific in adult. Overexpressed in hematologic tumor cells.

Its subcellular location is the cell projection. It localises to the cilium. It is found in the flagellum. Functionally, important for male fertility. With ROPN1L, involved in fibrous sheath integrity and sperm motility, plays a role in PKA-dependent signaling processes required for spermatozoa capacitation. In Homo sapiens (Human), this protein is Ropporin-1A (ROPN1).